Here is a 458-residue protein sequence, read N- to C-terminus: Probable M18 family aminopeptidase 1 (458 aa).

Zn(2+)-binding residues include histidine 95, histidine 170, and histidine 434.

Belongs to the peptidase M18 family. The cofactor is Zn(2+).

In Borrelia garinii subsp. bavariensis (strain ATCC BAA-2496 / DSM 23469 / PBi) (Borreliella bavariensis), this protein is Probable M18 family aminopeptidase 1.